Consider the following 316-residue polypeptide: Pentatricopeptide repeat-containing protein At1g19525 (316 aa).

PPR repeat units lie at residues D9–P43, D44–A78, S79–P113, S115–P149, D150–I184, and G185–P219.

The protein belongs to the PPR family. P subfamily.

This Arabidopsis thaliana (Mouse-ear cress) protein is Pentatricopeptide repeat-containing protein At1g19525.